The primary structure comprises 386 residues: Chaperone protein DnaJ (386 aa).

Residues 5–70 (DYYEVLGVER…QKRAAYDRYG (66 aa)) form the J domain. Residues 138-216 (GKDETIHVPQ…CGGHGQVKEE (79 aa)) form a CR-type zinc finger. Cys-151, Cys-154, Cys-168, Cys-171, Cys-190, Cys-193, Cys-204, and Cys-207 together coordinate Zn(2+). CXXCXGXG motif repeat units follow at residues 151–158 (CRPCEGTG), 168–175 (CETCGGHG), 190–197 (CHICQGRG), and 204–211 (CKTCGGHG).

It belongs to the DnaJ family. Homodimer. Zn(2+) is required as a cofactor.

The protein localises to the cytoplasm. Functionally, participates actively in the response to hyperosmotic and heat shock by preventing the aggregation of stress-denatured proteins and by disaggregating proteins, also in an autonomous, DnaK-independent fashion. Unfolded proteins bind initially to DnaJ; upon interaction with the DnaJ-bound protein, DnaK hydrolyzes its bound ATP, resulting in the formation of a stable complex. GrpE releases ADP from DnaK; ATP binding to DnaK triggers the release of the substrate protein, thus completing the reaction cycle. Several rounds of ATP-dependent interactions between DnaJ, DnaK and GrpE are required for fully efficient folding. Also involved, together with DnaK and GrpE, in the DNA replication of plasmids through activation of initiation proteins. This Hyphomonas neptunium (strain ATCC 15444) protein is Chaperone protein DnaJ.